We begin with the raw amino-acid sequence, 310 residues long: Homoserine kinase (310 aa).

91–101 (PIGSGLGSSAC) serves as a coordination point for ATP.

This sequence belongs to the GHMP kinase family. Homoserine kinase subfamily.

The protein resides in the cytoplasm. It carries out the reaction L-homoserine + ATP = O-phospho-L-homoserine + ADP + H(+). It participates in amino-acid biosynthesis; L-threonine biosynthesis; L-threonine from L-aspartate: step 4/5. Functionally, catalyzes the ATP-dependent phosphorylation of L-homoserine to L-homoserine phosphate. This is Homoserine kinase from Escherichia coli O6:K15:H31 (strain 536 / UPEC).